The following is a 299-amino-acid chain: tRNA pseudouridine synthase A (299 aa).

Catalysis depends on D67, which acts as the Nucleophile. Residue Y125 participates in substrate binding.

Belongs to the tRNA pseudouridine synthase TruA family. Homodimer.

The catalysed reaction is uridine(38/39/40) in tRNA = pseudouridine(38/39/40) in tRNA. In terms of biological role, formation of pseudouridine at positions 38, 39 and 40 in the anticodon stem and loop of transfer RNAs. This Parasynechococcus marenigrum (strain WH8102) protein is tRNA pseudouridine synthase A.